A 469-amino-acid chain; its full sequence is tRNA(Ile)-lysidine synthase (469 aa).

ATP is bound at residue Ser26–Ser31.

The protein belongs to the tRNA(Ile)-lysidine synthase family.

It is found in the cytoplasm. The enzyme catalyses cytidine(34) in tRNA(Ile2) + L-lysine + ATP = lysidine(34) in tRNA(Ile2) + AMP + diphosphate + H(+). Ligates lysine onto the cytidine present at position 34 of the AUA codon-specific tRNA(Ile) that contains the anticodon CAU, in an ATP-dependent manner. Cytidine is converted to lysidine, thus changing the amino acid specificity of the tRNA from methionine to isoleucine. The sequence is that of tRNA(Ile)-lysidine synthase from Clostridium perfringens (strain ATCC 13124 / DSM 756 / JCM 1290 / NCIMB 6125 / NCTC 8237 / Type A).